The chain runs to 942 residues: VPS35 endosomal protein sorting factor-like (942 aa).

It belongs to the VPS35L family. Component of the heterotrimeric retriever complex.

It is found in the endosome. In terms of biological role, acts as a component of the retriever complex. The retriever complex is a heterotrimeric complex related to retromer cargo-selective complex (CSC) and essential for retromer-independent retrieval and recycling of numerous cargos. The sequence is that of VPS35 endosomal protein sorting factor-like from Drosophila melanogaster (Fruit fly).